Consider the following 298-residue polypeptide: Protoheme IX farnesyltransferase 1 (298 aa).

Helical transmembrane passes span 21 to 41, 43 to 63, 94 to 114, 118 to 138, 144 to 164, 168 to 188, 215 to 235, 236 to 256, and 274 to 294; these read QVWW…INSF, SYLI…SMGA, KGAF…LLIF, LAAL…SYLL, YSII…WYTV, FSWI…VHVW, TAVS…IPYF, LGFF…PIVI, and FIYT…IHII.

This sequence belongs to the UbiA prenyltransferase family. Protoheme IX farnesyltransferase subfamily.

Its subcellular location is the cell membrane. The catalysed reaction is heme b + (2E,6E)-farnesyl diphosphate + H2O = Fe(II)-heme o + diphosphate. Its pathway is porphyrin-containing compound metabolism; heme O biosynthesis; heme O from protoheme: step 1/1. Converts heme B (protoheme IX) to heme O by substitution of the vinyl group on carbon 2 of heme B porphyrin ring with a hydroxyethyl farnesyl side group. This Picrophilus torridus (strain ATCC 700027 / DSM 9790 / JCM 10055 / NBRC 100828 / KAW 2/3) protein is Protoheme IX farnesyltransferase 1.